The primary structure comprises 600 residues: Glutamine--fructose-6-phosphate aminotransferase [isomerizing] (600 aa).

Cys-2 serves as the catalytic Nucleophile; for GATase activity. One can recognise a Glutamine amidotransferase type-2 domain in the interval 2-217; that stretch reads CGIVGFIGEQ…DKEIVIVMKE (216 aa). 2 SIS domains span residues 283-422 and 452-590; these read IRNA…AKGE and LAKQ…VDKP. Residue Lys-595 is the For Fru-6P isomerization activity of the active site.

In terms of assembly, homodimer.

The protein resides in the cytoplasm. It carries out the reaction D-fructose 6-phosphate + L-glutamine = D-glucosamine 6-phosphate + L-glutamate. In terms of biological role, catalyzes the first step in hexosamine metabolism, converting fructose-6P into glucosamine-6P using glutamine as a nitrogen source. This chain is Glutamine--fructose-6-phosphate aminotransferase [isomerizing], found in Bacillus thuringiensis subsp. konkukian (strain 97-27).